A 419-amino-acid polypeptide reads, in one-letter code: UDP-N-acetylmuramoylalanine--D-glutamate ligase (419 aa).

Position 109-115 (109-115 (GSAGKTT)) interacts with ATP.

This sequence belongs to the MurCDEF family.

The protein localises to the cytoplasm. It carries out the reaction UDP-N-acetyl-alpha-D-muramoyl-L-alanine + D-glutamate + ATP = UDP-N-acetyl-alpha-D-muramoyl-L-alanyl-D-glutamate + ADP + phosphate + H(+). It functions in the pathway cell wall biogenesis; peptidoglycan biosynthesis. Functionally, cell wall formation. Catalyzes the addition of glutamate to the nucleotide precursor UDP-N-acetylmuramoyl-L-alanine (UMA). The polypeptide is UDP-N-acetylmuramoylalanine--D-glutamate ligase (Chlamydia caviae (strain ATCC VR-813 / DSM 19441 / 03DC25 / GPIC) (Chlamydophila caviae)).